The primary structure comprises 1223 residues: RNA-binding protein 20 (1223 aa).

Disordered stretches follow at residues 1-59, 238-288, and 306-381; these read MVLA…QAGL, QAYG…PTSQ, and GEVG…GARR. Pro residues predominate over residues 29 to 57; the sequence is APAPPAPPGPRGMQPPPPPPPPPPPPPQA. Polar residues-rich tracts occupy residues 238 to 261 and 314 to 331; these read QAYG…SGSV and GPNS…QSKP. The U1-type zinc-finger motif lies at 410–444; the sequence is HLPHICSICDKKVFDLKDWELHVKGKLHAQKCLLF. The RRM domain occupies 520–595; that stretch reads RVVHICNLPE…EKLLIRMSKR (76 aa). A compositionally biased stretch (basic and acidic residues) spans 626 to 636; the sequence is EADRYGPERPR. 3 disordered regions span residues 626–902, 971–995, and 1042–1102; these read EADR…TNME, EISL…DVEM, and MSSP…STQE. Residues 630–657 form an RS region; the sequence is YGPERPRSRSPVSRSLSPRSHTPSFTSC. Residues Ser-637, Ser-639, Ser-642, Ser-644, Ser-662, and Ser-681 each carry the phosphoserine modification. Residues 638-662 are compositionally biased toward low complexity; the sequence is RSPVSRSLSPRSHTPSFTSCSSSHS. Basic and acidic residues-rich tracts occupy residues 676-711 and 718-737; these read DSWE…MWAH and RQVD…GYRE. The segment covering 742 to 752 has biased composition (low complexity); that stretch reads SGSPSSLHSVS. Residue Ser-744 is modified to Phosphoserine. 2 stretches are compositionally biased toward basic and acidic residues: residues 755–774 and 786–852; these read KSRE…DKYL and RKDE…KEEQ. Phosphoserine is present on residues Ser-803, Ser-861, Ser-872, Ser-887, Ser-889, Ser-973, Ser-976, and Ser-1044. A compositionally biased stretch (basic and acidic residues) spans 864–884; it reads RQEKETESSDAENTRTRKEQD. The segment covering 1083 to 1102 has biased composition (polar residues); it reads STPTETDLQSQACQGVSTQE. Phosphoserine is present on residues Ser-1111 and Ser-1116. The segment at 1157 to 1188 adopts a Matrin-type zinc-finger fold; that stretch reads FYCKLCGLFYTSEEMAKMSHCRSAVHYRNLQK. Residues 1197–1223 form a disordered region; the sequence is GLKETEGAGSPRPEDSGIVPHFERKKL. The residue at position 1206 (Ser-1206) is a Phosphoserine.

Associates with components of the U1 and U2 U1 small nuclear ribonucleoprotein complexes. Post-translationally, phosphorylation regulates the subcellular localization. Phosphorylation of Ser-637 and Ser-639 in the RS (arginine/serine-rich) region promotes nuclear localization of the protein. In contrast, phosphorylation of the C-terminal disordered region promotes localization to cytoplasmic ribonucleoprotein granules.

It is found in the nucleus. The protein localises to the cytoplasm. It localises to the cytoplasmic ribonucleoprotein granule. Its function is as follows. RNA-binding protein that acts as a regulator of mRNA splicing of a subset of genes encoding key structural proteins involved in cardiac development, such as TTN (Titin), CACNA1C, CAMK2D or PDLIM5/ENH. Acts as a repressor of mRNA splicing: specifically binds the 5'UCUU-3' motif that is predominantly found within intronic sequences of pre-mRNAs, leading to the exclusion of specific exons in target transcripts. RBM20-mediated exon skipping is hormone-dependent and is essential for TTN isoform transition in both cardiac and skeletal muscles. RBM20-mediated exon skipping of TTN provides substrates for the formation of circular RNA (circRNAs) from the TTN transcripts. Together with RBM24, promotes the expression of short isoforms of PDLIM5/ENH in cardiomyocytes. The polypeptide is RNA-binding protein 20 (Sus scrofa (Pig)).